The chain runs to 614 residues: Glucosidase 2 subunit beta (614 aa).

A signal peptide spans 1-20 (MGLHTLLLLLLLRISASAAA). Residue N115 is glycosylated (N-linked (GlcNAc...) asparagine). 3 stretches are compositionally biased toward basic and acidic residues: residues 194–222 (EEERLRKEKEEKRMKEEAEKQAADEKKAS), 231–272 (QENH…HDPE), and 324–351 (TGEKVDEVSKDDKNEHEAEHDMPEHSEE). The tract at residues 194–396 (EEERLRKEKE…SHESDDEYVD (203 aa)) is disordered. The span at 352-364 (THEDESDVPESAE) shows a compositional bias: acidic residues. Positions 372 to 382 (SEVEDDRHKYD) are enriched in basic and acidic residues. Residues 383–396 (DEDFSHESDDEYVD) are compositionally biased toward acidic residues. One can recognise an MRH domain in the interval 497-592 (DQCFESKEGK…VLSTPALCDE (96 aa)). 3 disulfides stabilise this stretch: C499–C512, C549–C578, and C563–C590.

As to quaternary structure, heterodimer of a catalytic alpha subunit and a beta subunit.

The protein localises to the endoplasmic reticulum. It functions in the pathway glycan metabolism; N-glycan metabolism. Its function is as follows. Regulatory subunit of glucosidase II. May be required for defense response elicited by pathogen-associated molecular patterns (PAMPs). The chain is Glucosidase 2 subunit beta from Oryza sativa subsp. indica (Rice).